The chain runs to 181 residues: Adenine phosphoribosyltransferase (181 aa).

It belongs to the purine/pyrimidine phosphoribosyltransferase family. As to quaternary structure, homodimer.

The protein localises to the cytoplasm. The catalysed reaction is AMP + diphosphate = 5-phospho-alpha-D-ribose 1-diphosphate + adenine. The protein operates within purine metabolism; AMP biosynthesis via salvage pathway; AMP from adenine: step 1/1. Catalyzes a salvage reaction resulting in the formation of AMP, that is energically less costly than de novo synthesis. The sequence is that of Adenine phosphoribosyltransferase from Methylobacterium radiotolerans (strain ATCC 27329 / DSM 1819 / JCM 2831 / NBRC 15690 / NCIMB 10815 / 0-1).